The primary structure comprises 400 residues: Haptoglobin (400 aa).

The N-terminal stretch at 1 to 18 (MSALPVVVTLLLCGQLLA) is a signal peptide. Sushi domains follow at residues 28–83 (DSCP…ECED) and 84–141 (ASCP…ECEA). 3 cysteine pairs are disulfide-bonded: Cys-49–Cys-81, Cys-105–Cys-139, and Cys-143–Cys-260. One can recognise a Peptidase S1 domain in the interval 156 to 398 (IIGGSLDAKG…ILDWVRKTIA (243 aa)). N-linked (GlcNAc...) asparagine glycosylation is found at Asn-285, Asn-309, and Asn-315. Cystine bridges form between Cys-303–Cys-334 and Cys-345–Cys-375. Positions 312–317 (VPENKT) are interaction with CD163.

It belongs to the peptidase S1 family. In terms of assembly, tetramer of two alpha and two beta chains; disulfide-linked. The hemoglobin/haptoglobin complex is composed of a haptoglobin dimer bound to two hemoglobin alpha-beta dimers. Interacts with CD163. Interacts with ERGIC3. Expressed by the liver and secreted in plasma.

The protein localises to the secreted. The protein resides in the extracellular space. As a result of hemolysis, hemoglobin is found to accumulate in the kidney and is secreted in the urine. Haptoglobin captures, and combines with free plasma hemoglobin to allow hepatic recycling of heme iron and to prevent kidney damage. Haptoglobin also acts as an antioxidant, has antibacterial activity and plays a role in modulating many aspects of the acute phase response. Hemoglobin/haptoglobin complexes are rapidly cleared by the macrophage CD163 scavenger receptor expressed on the surface of liver Kupfer cells through an endocytic lysosomal degradation pathway. The chain is Haptoglobin (HP) from Cervus elaphus (Red deer).